Here is a 319-residue protein sequence, read N- to C-terminus: Ribonuclease Z (319 aa).

Residues His-62, His-64, Asp-66, His-67, His-145, Asp-216, and His-274 each coordinate Zn(2+). Catalysis depends on Asp-66, which acts as the Proton acceptor.

The protein belongs to the RNase Z family. In terms of assembly, homodimer. Zn(2+) serves as cofactor.

It catalyses the reaction Endonucleolytic cleavage of RNA, removing extra 3' nucleotides from tRNA precursor, generating 3' termini of tRNAs. A 3'-hydroxy group is left at the tRNA terminus and a 5'-phosphoryl group is left at the trailer molecule.. Its function is as follows. Zinc phosphodiesterase, which displays some tRNA 3'-processing endonuclease activity. Probably involved in tRNA maturation, by removing a 3'-trailer from precursor tRNA. This chain is Ribonuclease Z, found in Parasynechococcus marenigrum (strain WH8102).